Consider the following 444-residue polypeptide: Structure-specific endonuclease subunit SLX1 (444 aa).

A GIY-YIG domain is found at 23 to 105; that stretch reads AFYCCYLLRS…QNTKVSRHAD (83 aa). The SLX1-type zinc-finger motif lies at 240–295; the sequence is CGVCKQRLILQHDIIAVCSHSSCHCAAHLSCLSSHFLKDKDSDSELIPREGTCPAC. Disordered stretches follow at residues 323 to 355 and 386 to 444; these read RRRRQAGTPKGQGLKSVRGRGRGHSEDESDALQ and AHRP…EVIE.

This sequence belongs to the SLX1 family. In terms of assembly, forms a heterodimer with SLX4. It depends on a divalent metal cation as a cofactor.

It localises to the nucleus. In terms of biological role, catalytic subunit of the SLX1-SLX4 structure-specific endonuclease that resolves DNA secondary structures generated during DNA repair and recombination. Has endonuclease activity towards branched DNA substrates, introducing single-strand cuts in duplex DNA close to junctions with ss-DNA. This Paracoccidioides brasiliensis (strain Pb18) protein is Structure-specific endonuclease subunit SLX1.